Here is a 105-residue protein sequence, read N- to C-terminus: Small ribosomal subunit protein uS10 (105 aa).

The protein belongs to the universal ribosomal protein uS10 family. Part of the 30S ribosomal subunit.

In terms of biological role, involved in the binding of tRNA to the ribosomes. This chain is Small ribosomal subunit protein uS10, found in Rickettsia akari (strain Hartford).